A 77-amino-acid chain; its full sequence is uncharacterized protein (77 aa).

Residues 57 to 76 traverse the membrane as a helical segment; the sequence is NSAVICTLIANLMAFFMLLT.

It is found in the membrane. This is an uncharacterized protein from Schizosaccharomyces pombe (strain 972 / ATCC 24843) (Fission yeast).